The following is a 576-amino-acid chain: MQPEQQVMLNQVWAELIIEELVRNGVKHICIAPGSRSTPLTLAASEHALLSIHTHFDERGLGFLALGIAKASNDPVAVIVTSGTAVANLLPSVAESGLTKEKLVLLTADRPVELINCGANQAINQQGIFSSHVCHSLQLPSPSQNVPAQWLLSRLDQACFVQQEQGGAIHINCPFPEPFYGKKDDSLLVDYLAPIQNWKADTSSYIQQTPYFSHVTLSPNWMQTARKKGVVIIGKVSLEEANCAAQLAKELGWPVLADPQSGYYSEWAHYDLWLQNSACFELLSEVECVLQFGARLVSKRLGAWLKNYQQAYYLIDPHSELLNESCHAHVRYRADISTWCQTHADSLADRDCVFDHAPSVHWSESLKVASQNALALARSMACNSETLSELSFALTVGQKANDCDWFVGNSLIVRLLDMTGELNQKNVYTNRGASGIDGLVATAVGVQLANDKPLLALVGDTSLLYDLNSLALLKQATQPMVVVVMNNDGGGIFDLLPVNEKKKDDFYRMPHQLEFSHAAAMFGLSYHRPETLSCAMSMINDGLEKGIHLIEINTPAGQSGEELTRLFQTIQHAALF.

This sequence belongs to the TPP enzyme family. MenD subfamily. In terms of assembly, homodimer. Mg(2+) serves as cofactor. Mn(2+) is required as a cofactor. Requires thiamine diphosphate as cofactor.

It carries out the reaction isochorismate + 2-oxoglutarate + H(+) = 5-enolpyruvoyl-6-hydroxy-2-succinyl-cyclohex-3-ene-1-carboxylate + CO2. The protein operates within quinol/quinone metabolism; 1,4-dihydroxy-2-naphthoate biosynthesis; 1,4-dihydroxy-2-naphthoate from chorismate: step 2/7. Its pathway is quinol/quinone metabolism; menaquinone biosynthesis. Catalyzes the thiamine diphosphate-dependent decarboxylation of 2-oxoglutarate and the subsequent addition of the resulting succinic semialdehyde-thiamine pyrophosphate anion to isochorismate to yield 2-succinyl-5-enolpyruvyl-6-hydroxy-3-cyclohexene-1-carboxylate (SEPHCHC). This Aliivibrio fischeri (strain ATCC 700601 / ES114) (Vibrio fischeri) protein is 2-succinyl-5-enolpyruvyl-6-hydroxy-3-cyclohexene-1-carboxylate synthase.